Reading from the N-terminus, the 99-residue chain is NADH-quinone oxidoreductase subunit K (99 aa).

3 consecutive transmembrane segments (helical) span residues 3-23, 28-48, and 59-79; these read PDNY…GVML, IVVF…FVTF, and VIAF…LGII.

Belongs to the complex I subunit 4L family. NDH-1 is composed of 14 different subunits. Subunits NuoA, H, J, K, L, M, N constitute the membrane sector of the complex.

The protein resides in the cell membrane. The enzyme catalyses a quinone + NADH + 5 H(+)(in) = a quinol + NAD(+) + 4 H(+)(out). Its function is as follows. NDH-1 shuttles electrons from NADH, via FMN and iron-sulfur (Fe-S) centers, to quinones in the respiratory chain. The immediate electron acceptor for the enzyme in this species is believed to be a menaquinone. Couples the redox reaction to proton translocation (for every two electrons transferred, four hydrogen ions are translocated across the cytoplasmic membrane), and thus conserves the redox energy in a proton gradient. The sequence is that of NADH-quinone oxidoreductase subunit K from Mycobacteroides abscessus (strain ATCC 19977 / DSM 44196 / CCUG 20993 / CIP 104536 / JCM 13569 / NCTC 13031 / TMC 1543 / L948) (Mycobacterium abscessus).